A 228-amino-acid polypeptide reads, in one-letter code: Superoxide dismutase [Mn], mitochondrial (228 aa).

A mitochondrion-targeting transit peptide spans 1 to 24 (MALRTLVSRRTLATGLGFRQQLRG). The Mn(2+) site is built by His52, His100, Asp189, and His193.

The protein belongs to the iron/manganese superoxide dismutase family. As to quaternary structure, homotetramer. Requires Mn(2+) as cofactor.

The protein resides in the mitochondrion matrix. The enzyme catalyses 2 superoxide + 2 H(+) = H2O2 + O2. Its function is as follows. Destroys superoxide anion radicals which are normally produced within the cells and which are toxic to biological systems. The sequence is that of Superoxide dismutase [Mn], mitochondrial (SODA) from Nicotiana plumbaginifolia (Leadwort-leaved tobacco).